The sequence spans 606 residues: Threonine--tRNA ligase (606 aa).

A catalytic region spans residues 212-503 (DHRKLGVEMK…LLEHTAGELP (292 aa)). C304, H355, and H480 together coordinate Zn(2+).

Belongs to the class-II aminoacyl-tRNA synthetase family. As to quaternary structure, homodimer. Zn(2+) is required as a cofactor.

The protein resides in the cytoplasm. The enzyme catalyses tRNA(Thr) + L-threonine + ATP = L-threonyl-tRNA(Thr) + AMP + diphosphate + H(+). Its function is as follows. Catalyzes the attachment of threonine to tRNA(Thr) in a two-step reaction: L-threonine is first activated by ATP to form Thr-AMP and then transferred to the acceptor end of tRNA(Thr). Also edits incorrectly charged L-seryl-tRNA(Thr). This is Threonine--tRNA ligase from Campylobacter concisus (strain 13826).